The primary structure comprises 75 residues: Conotoxin Vt15.1 (75 aa).

Residues 1-19 (MMPVILPLLLSLAIRGGDG) form the signal peptide. Positions 20–43 (QAIQGDRDLIAKLFKRYQEHGLSV) are excised as a propeptide. Tryptophan amide is present on Trp73.

It belongs to the conotoxin V superfamily. In terms of processing, contains 4 disulfide bonds. In terms of tissue distribution, expressed by the venom duct.

The protein resides in the secreted. The sequence is that of Conotoxin Vt15.1 from Conus planorbis (Planorbis cone).